The chain runs to 414 residues: Histidine--tRNA ligase (414 aa).

The protein belongs to the class-II aminoacyl-tRNA synthetase family. Homodimer.

The protein resides in the cytoplasm. It carries out the reaction tRNA(His) + L-histidine + ATP = L-histidyl-tRNA(His) + AMP + diphosphate + H(+). The chain is Histidine--tRNA ligase from Rickettsia africae (strain ESF-5).